We begin with the raw amino-acid sequence, 618 residues long: DNA mismatch repair protein MutL (618 aa).

Low complexity predominate over residues 367 to 381 (EPTAAREPATPRYSG). Positions 367-402 (EPTAAREPATPRYSGGASGGNGGRQSAGGWPHAQPG) are disordered. Residues 382 to 392 (GASGGNGGRQS) are compositionally biased toward gly residues.

Belongs to the DNA mismatch repair MutL/HexB family.

In terms of biological role, this protein is involved in the repair of mismatches in DNA. It is required for dam-dependent methyl-directed DNA mismatch repair. May act as a 'molecular matchmaker', a protein that promotes the formation of a stable complex between two or more DNA-binding proteins in an ATP-dependent manner without itself being part of a final effector complex. In Salmonella gallinarum (strain 287/91 / NCTC 13346), this protein is DNA mismatch repair protein MutL.